Reading from the N-terminus, the 183-residue chain is Pyruvoyl-dependent arginine decarboxylase 2 (183 aa).

Position 41 is a pyruvic acid (Ser) (serine 41).

It belongs to the PdaD family. Requires pyruvate as cofactor.

The enzyme catalyses L-arginine + H(+) = agmatine + CO2. The protein is Pyruvoyl-dependent arginine decarboxylase 2 (pdaD2) of Methanosarcina mazei (strain ATCC BAA-159 / DSM 3647 / Goe1 / Go1 / JCM 11833 / OCM 88) (Methanosarcina frisia).